The chain runs to 885 residues: Leucine--tRNA ligase (885 aa).

The 'HIGH' region signature appears at 43 to 53 (PYTSGQLHMGH). A 'KMSKS' region motif is present at residues 571–575 (KMSKS). Lys-574 lines the ATP pocket. Residues 866–885 (SVANKAEPGRPAIHVDEADD) form a disordered region.

Belongs to the class-I aminoacyl-tRNA synthetase family.

It is found in the cytoplasm. It carries out the reaction tRNA(Leu) + L-leucine + ATP = L-leucyl-tRNA(Leu) + AMP + diphosphate. This Halobacterium salinarum (strain ATCC 700922 / JCM 11081 / NRC-1) (Halobacterium halobium) protein is Leucine--tRNA ligase.